The chain runs to 325 residues: Fatty acid synthase alpha subunit hexA (325 aa).

Mg(2+) is bound at residue Asp-209. Acetyl-CoA contacts are provided by residues 209–211 (DLV), 255–265 (EAVFKCLHTQT), 279–282 (KSDN), and 301–303 (ISH). Residue Ser-302 coordinates Mg(2+).

This sequence belongs to the thiolase-like superfamily. Fungal fatty acid synthetase subunit alpha family. [Alpha(6)beta(6)] hexamers of two multifunctional subunits (alpha and beta). 4'-phosphopantetheine is transferred from CoA to a specific serine of the acyl carrier domain by the C-terminal PPT domain. This modification is essential for activity because fatty acids are bound in thioester linkage to the sulfhydryl of the prosthetic group.

The enzyme catalyses acetyl-CoA + n malonyl-CoA + 2n NADPH + 4n H(+) = a long-chain-acyl-CoA + n CoA + n CO2 + 2n NADP(+).. It carries out the reaction a fatty acyl-[ACP] + malonyl-[ACP] + H(+) = a 3-oxoacyl-[ACP] + holo-[ACP] + CO2. The catalysed reaction is a (3R)-hydroxyacyl-[ACP] + NADP(+) = a 3-oxoacyl-[ACP] + NADPH + H(+). Its pathway is mycotoxin biosynthesis. In terms of biological role, fatty acid synthase alpha subunit; part of the fragmented gene cluster that mediates the biosynthesis of dothistromin (DOTH), a polyketide toxin very similar in structure to the aflatoxin precursor, versicolorin B. The first step of the pathway is the conversion of acetate to norsolorinic acid (NOR) and requires the fatty acid synthase subunits hexA and hexB, as well as the polyketide synthase pksA. PksA combines a hexanoyl starter unit and 7 malonyl-CoA extender units to synthesize the precursor NOR. The hexanoyl starter unit is provided to the acyl-carrier protein (ACP) domain by the fungal fatty acid synthase hexA/hexB. The second step is the conversion of NOR to averantin (AVN) and requires the norsolorinic acid ketoreductase nor1, which catalyzes the dehydration of norsolorinic acid to form (1'S)-averantin. The cytochrome P450 monooxygenase avnA then catalyzes the hydroxylation of AVN to 5'hydroxyaverantin (HAVN). The next step is performed by adhA that transforms HAVN to averufin (AVF). Averufin might then be converted to hydroxyversicolorone by cypX and avfA. Hydroxyversicolorone is further converted versiconal hemiacetal acetate (VHA) by moxY. VHA is then the substrate for the versiconal hemiacetal acetate esterase est1 to yield versiconal (VAL). Versicolorin B synthase vbsA then converts VAL to versicolorin B (VERB) by closing the bisfuran ring. Then, the activity of the versicolorin B desaturase verB leads to versicolorin A (VERA). DotB, a predicted chloroperoxidase, may perform epoxidation of the A-ring of VERA. Alternatively, a cytochrome P450, such as cypX or avnA could catalyze this step. It is also possible that another, uncharacterized, cytochrome P450 enzyme is responsible for this step. Opening of the epoxide could potentially be achieved by the epoxide hydrolase epoA. However, epoA seems not to be required for DOTH biosynthesis, but other epoxide hydrolases may have the ability to complement this hydrolysis. Alternatively, opening of the epoxide ring could be achieved non-enzymatically. The next step is the deoxygenation of ring A to yield the 5,8-dihydroxyanthraquinone which is most likely catalyzed by the NADPH dehydrogenase encoded by ver1. The last stages of DOTH biosynthesis are proposed to involve hydroxylation of the bisfuran. OrdB and norB might have oxidative roles here. An alternative possibility is that cytochrome P450 monoogenases such as avnA and cypX might perform these steps in addition to previously proposed steps. This Dothistroma septosporum (Red band needle blight fungus) protein is Fatty acid synthase alpha subunit hexA.